Here is an 866-residue protein sequence, read N- to C-terminus: Rifampicin phosphotransferase (866 aa).

An ATP-binding region spans residues 1–313 (MSSLVLGLHE…FYIVQSRPIT (313 aa)). ATP contacts are provided by Lys22, Arg116, Gly131, Thr135, Gln182, Glu296, Gln308, and Arg310. Residues 326 to 754 (NHVYISVGHQ…TSDGEIVTGE (429 aa)) are rifampicin-binding. The disordered stretch occupies residues 410–429 (IPNDKTAPNPSRGNADMPAQ). Positions 767–865 (GLPVSSGVIE…VHGTEGYIEI (99 aa)) are swivel phosphohistidine. His825 functions as the Tele-phosphohistidine intermediate in the catalytic mechanism.

This sequence belongs to the rifampicin phosphotransferase family.

It catalyses the reaction rifampicin + ATP + H2O = 21-phosphorifampicin + AMP + phosphate + 2 H(+). Its function is as follows. Catalyzes the phosphorylation of rifampicin, also known as rifampin (RIF), leading to its inactivation. The sequence is that of Rifampicin phosphotransferase from Bacillus subtilis (strain 168).